The sequence spans 244 residues: DNA polymerase sliding clamp (244 aa).

This sequence belongs to the PCNA family. In terms of assembly, homotrimer. The subunits circularize to form a toroid; DNA passes through its center. Replication factor C (RFC) is required to load the toroid on the DNA.

Sliding clamp subunit that acts as a moving platform for DNA processing. Responsible for tethering the catalytic subunit of DNA polymerase to DNA during high-speed replication. In conjunction with replication factor C (RFC) stimulates DNA synthesis by PolB, relieving inhibition by replication protein A (RPA). This chain is DNA polymerase sliding clamp, found in Methanothermobacter thermautotrophicus (strain ATCC 29096 / DSM 1053 / JCM 10044 / NBRC 100330 / Delta H) (Methanobacterium thermoautotrophicum).